The chain runs to 132 residues: uncharacterized protein (132 aa).

The tract at residues 17 to 75 (RSAVPRWPHLSSQSGVEPPDRWTGTPGWPSRDQEAPGSMMPPAAAQPSAHGALVPPATA) is disordered. Low complexity predominate over residues 51 to 65 (APGSMMPPAAAQPSA).

In terms of tissue distribution, expressed exclusively in heart.

The protein resides in the cytoplasm. This is an uncharacterized protein from Homo sapiens (Human).